The primary structure comprises 373 residues: Dual-specificity RNA methyltransferase RlmN (373 aa).

Residue glutamate 104 is the Proton acceptor of the active site. The 240-residue stretch at 110-349 (KNQRTTLCIS…VTIRKIRGYD (240 aa)) folds into the Radical SAM core domain. A disulfide bridge links cysteine 117 with cysteine 354. Residues cysteine 124, cysteine 128, and cysteine 131 each coordinate [4Fe-4S] cluster. Residues 178–179 (GE), serine 210, 232–234 (SLH), and asparagine 311 contribute to the S-adenosyl-L-methionine site. Cysteine 354 functions as the S-methylcysteine intermediate in the catalytic mechanism.

This sequence belongs to the radical SAM superfamily. RlmN family. It depends on [4Fe-4S] cluster as a cofactor.

The protein localises to the cytoplasm. It carries out the reaction adenosine(2503) in 23S rRNA + 2 reduced [2Fe-2S]-[ferredoxin] + 2 S-adenosyl-L-methionine = 2-methyladenosine(2503) in 23S rRNA + 5'-deoxyadenosine + L-methionine + 2 oxidized [2Fe-2S]-[ferredoxin] + S-adenosyl-L-homocysteine. It catalyses the reaction adenosine(37) in tRNA + 2 reduced [2Fe-2S]-[ferredoxin] + 2 S-adenosyl-L-methionine = 2-methyladenosine(37) in tRNA + 5'-deoxyadenosine + L-methionine + 2 oxidized [2Fe-2S]-[ferredoxin] + S-adenosyl-L-homocysteine. In terms of biological role, specifically methylates position 2 of adenine 2503 in 23S rRNA and position 2 of adenine 37 in tRNAs. m2A2503 modification seems to play a crucial role in the proofreading step occurring at the peptidyl transferase center and thus would serve to optimize ribosomal fidelity. This is Dual-specificity RNA methyltransferase RlmN from Buchnera aphidicola subsp. Baizongia pistaciae (strain Bp).